The following is a 348-amino-acid chain: Holliday junction branch migration complex subunit RuvB (348 aa).

The segment at 1–181 (MEERMITPQQ…FGVISRLEFY (181 aa)) is large ATPase domain (RuvB-L). ATP contacts are provided by leucine 20, arginine 21, glycine 62, lysine 65, threonine 66, threonine 67, arginine 171, tyrosine 181, and arginine 218. Threonine 66 contributes to the Mg(2+) binding site. Residues 182–252 (EVEDLIRIIT…LAGKSLDRLE (71 aa)) are small ATPAse domain (RuvB-S). The head domain (RuvB-H) stretch occupies residues 255–348 (PAGLDRIDQK…GDSLFDAAED (94 aa)). Residues arginine 310 and arginine 315 each contribute to the DNA site. Residues 329–348 (VNSSHQEGGQGDSLFDAAED) form a disordered region.

The protein belongs to the RuvB family. In terms of assembly, homohexamer. Forms an RuvA(8)-RuvB(12)-Holliday junction (HJ) complex. HJ DNA is sandwiched between 2 RuvA tetramers; dsDNA enters through RuvA and exits via RuvB. An RuvB hexamer assembles on each DNA strand where it exits the tetramer. Each RuvB hexamer is contacted by two RuvA subunits (via domain III) on 2 adjacent RuvB subunits; this complex drives branch migration. In the full resolvosome a probable DNA-RuvA(4)-RuvB(12)-RuvC(2) complex forms which resolves the HJ.

The protein resides in the cytoplasm. The enzyme catalyses ATP + H2O = ADP + phosphate + H(+). Its function is as follows. The RuvA-RuvB-RuvC complex processes Holliday junction (HJ) DNA during genetic recombination and DNA repair, while the RuvA-RuvB complex plays an important role in the rescue of blocked DNA replication forks via replication fork reversal (RFR). RuvA specifically binds to HJ cruciform DNA, conferring on it an open structure. The RuvB hexamer acts as an ATP-dependent pump, pulling dsDNA into and through the RuvAB complex. RuvB forms 2 homohexamers on either side of HJ DNA bound by 1 or 2 RuvA tetramers; 4 subunits per hexamer contact DNA at a time. Coordinated motions by a converter formed by DNA-disengaged RuvB subunits stimulates ATP hydrolysis and nucleotide exchange. Immobilization of the converter enables RuvB to convert the ATP-contained energy into a lever motion, pulling 2 nucleotides of DNA out of the RuvA tetramer per ATP hydrolyzed, thus driving DNA branch migration. The RuvB motors rotate together with the DNA substrate, which together with the progressing nucleotide cycle form the mechanistic basis for DNA recombination by continuous HJ branch migration. Branch migration allows RuvC to scan DNA until it finds its consensus sequence, where it cleaves and resolves cruciform DNA. The chain is Holliday junction branch migration complex subunit RuvB from Desulfitobacterium hafniense (strain DSM 10664 / DCB-2).